The following is a 209-amino-acid chain: Putative tripartite motif-containing protein 61 (209 aa).

The RING-type zinc finger occupies 16–57 (CPICLDYLKDPVTISCGHNFCLSCIIMSWKDLHDSFPCPFCH). The B box-type zinc-finger motif lies at 92 to 133 (EEKHVCKKHNQVLTFFCQKDLELLCPRCSLSTDHQHHCVWPI). Positions 97, 100, 119, and 125 each coordinate Zn(2+).

This chain is Putative tripartite motif-containing protein 61 (TRIM61), found in Homo sapiens (Human).